Here is a 341-residue protein sequence, read N- to C-terminus: MPSRIPLPAFCCFLLPWAFTSFHKALGNPAPHPGPHYLLPPIHEVIHSRRGATATLPCVLGTSPPSYKVRWSKVEPGELRETLILITNGLHARDYGLLGGRASLRRGHRLDASLIIKNVRLEDEGRYRCELINGIEDESVALTLRLEGVVFPYQPSRGRYQFNYFEAKRACEEQDGRLATYGQLYQAWTEGLDWCNAGWLLEGSVRYPVLTARAPCGGHGRPGIRSYGPRDRSRDRYDAFCFTSALAGQVFFVPGRLTLSEAHAACRRRGAVVAKVGHLYAAWKFSGLDQCDGGWLADGSVRFPITTPRPRCGGLPDPGVRSFGFPRPQQASYGTYCYAEK.

Residues 1–27 (MPSRIPLPAFCCFLLPWAFTSFHKALG) form the signal peptide. The region spanning 35–143 (PHYLLPPIHE…GIEDESVALT (109 aa)) is the Ig-like V-type domain. 5 disulfide bridges follow: cysteine 58-cysteine 129, cysteine 171-cysteine 241, cysteine 195-cysteine 216, cysteine 266-cysteine 337, and cysteine 291-cysteine 312. 2 Link domains span residues 149–243 (VVFP…FCFT) and 246–339 (LAGQ…YCYA).

The protein belongs to the HAPLN family. As to expression, brain. Predominantly expressed by neurons. Colocalizes with versican V2 in developing and adult cerebellar white matter and at the nodes of Ranvier.

It localises to the secreted. Its subcellular location is the extracellular space. It is found in the extracellular matrix. Its function is as follows. Mediates a firm binding of versican V2 to hyaluronic acid. May play a pivotal role in the formation of the hyaluronan-associated matrix in the central nervous system (CNS) which facilitates neuronal conduction and general structural stabilization. Binds to hyaluronic acid. This is Hyaluronan and proteoglycan link protein 2 (Hapln2) from Mus musculus (Mouse).